We begin with the raw amino-acid sequence, 451 residues long: Protein-tyrosine kinase 6 (451 aa).

An SH3 domain is found at 8 to 72 (HLGPKYVGLW…PHNYLAERET (65 aa)). Phosphotyrosine; by autocatalysis occurs at positions 13, 61, 66, and 114. In terms of domain architecture, SH2 spans 78–170 (WFFGCISRSE…SHGLRLAAPC (93 aa)). The interval 171–190 (RKHEPEPLPHWDDWERPREE) is linker. Residues 191–445 (FTLCRKLGSG…ALRERLSSFT (255 aa)) form the Protein kinase domain. Residues 197–205 (LGSGYFGEV) and lysine 219 contribute to the ATP site. Aspartate 312 serves as the catalytic Proton acceptor. Phosphotyrosine; by autocatalysis is present on residues tyrosine 342 and tyrosine 351. Position 447 is a phosphotyrosine (tyrosine 447).

The protein belongs to the protein kinase superfamily. Tyr protein kinase family. BRK/PTK6/SIK subfamily. In terms of assembly, interacts with GAP-A.p65. Interacts (via SH3 and SH2 domains) with KHDRBS1. Interacts (via SH3 and SH2 domains) with phosphorylated IRS4. Interacts with ADAM15. Interacts (via SH3 domain) with SFPQ. Interacts with EGFR and ERBB2. Interacts with STAP2. Interacts with PNX. Interacts with SFPQ. Interacts with PTK/ATK. Interacts with CTNNB1. In terms of processing, autophosphorylated. Autophosphorylation of Tyr-342 leads to an increase of kinase activity. Tyr-447 binds to the SH2 domain when phosphorylated and negatively regulates kinase activity. In terms of tissue distribution, epithelia-specific. Very high level in colon and high levels in small intestine and prostate, and low levels in some fetal tissues. Not expressed in breast or ovarian tissue but expressed in high percentage of breast and ovarian cancers. Also overexpressed in some metastatic melanomas, lymphomas, colon cancers, squamous cell carcinomas and prostate cancers. Also found in melanocytes. Not expressed in heart, brain, placenta, lung, liver, skeletal muscle, kidney and pancreas. Isoform 2 is present in prostate epithelial cell lines derived from normal prostate and prostate adenocarcinomas, as well as in a variety of cell lines.

Its subcellular location is the cytoplasm. It localises to the nucleus. The protein localises to the cell projection. It is found in the ruffle. The protein resides in the membrane. The catalysed reaction is L-tyrosyl-[protein] + ATP = O-phospho-L-tyrosyl-[protein] + ADP + H(+). With respect to regulation, activated by EGF, NRG1 and IGF1. Inhibited by SOCS3 to phosphorylate STAT3. Stabilized in the inactive form by an association between the SH3 domain and the SH2-TK linker region. Interaction between Trp-184 within SH2-TK linker region and the catalytic domain appears essential for positive regulation of kinase activity. Non-receptor tyrosine-protein kinase implicated in the regulation of a variety of signaling pathways that control the differentiation and maintenance of normal epithelia, as well as tumor growth. Function seems to be context dependent and differ depending on cell type, as well as its intracellular localization. A number of potential nuclear and cytoplasmic substrates have been identified. These include the RNA-binding proteins: KHDRBS1/SAM68, KHDRBS2/SLM1, KHDRBS3/SLM2 and SFPQ/PSF; transcription factors: STAT3 and STAT5A/B and a variety of signaling molecules: ARHGAP35/p190RhoGAP, PXN/paxillin, BTK/ATK, STAP2/BKS. Phosphorylates the GTPase-activating protein ARAP1 following EGF stimulation which enhances EGFR signaling by delaying EGFR down-regulation. Also associates with a variety of proteins that are likely upstream of PTK6 in various signaling pathways, or for which PTK6 may play an adapter-like role. These proteins include ADAM15, EGFR, ERBB2, ERBB3 and IRS4. In normal or non-tumorigenic tissues, PTK6 promotes cellular differentiation and apoptosis. In tumors PTK6 contributes to cancer progression by sensitizing cells to mitogenic signals and enhancing proliferation, anchorage-independent survival and migration/invasion. Association with EGFR, ERBB2, ERBB3 may contribute to mammary tumor development and growth through enhancement of EGF-induced signaling via BTK/AKT and PI3 kinase. Contributes to migration and proliferation by contributing to EGF-mediated phosphorylation of ARHGAP35/p190RhoGAP, which promotes association with RASA1/p120RasGAP, inactivating RhoA while activating RAS. EGF stimulation resulted in phosphorylation of PNX/Paxillin by PTK6 and activation of RAC1 via CRK/CrKII, thereby promoting migration and invasion. PTK6 activates STAT3 and STAT5B to promote proliferation. Nuclear PTK6 may be important for regulating growth in normal epithelia, while cytoplasmic PTK6 might activate oncogenic signaling pathways. Functionally, inhibits PTK6 phosphorylation and PTK6 association with other tyrosine-phosphorylated proteins. This is Protein-tyrosine kinase 6 (PTK6) from Homo sapiens (Human).